We begin with the raw amino-acid sequence, 77 residues long: Putative defensin-like protein 162 (77 aa).

The signal sequence occupies residues 1-27 (MAKQLCSYMFISMFILSAFLALPSAEG). Cystine bridges form between Cys34/Cys77, Cys44/Cys63, Cys49/Cys71, and Cys53/Cys73.

The protein belongs to the DEFL family.

It is found in the secreted. The chain is Putative defensin-like protein 162 (LCR37) from Arabidopsis thaliana (Mouse-ear cress).